The chain runs to 86 residues: UPF0335 protein mll3968 (86 aa).

Belongs to the UPF0335 family.

The sequence is that of UPF0335 protein mll3968 from Mesorhizobium japonicum (strain LMG 29417 / CECT 9101 / MAFF 303099) (Mesorhizobium loti (strain MAFF 303099)).